Reading from the N-terminus, the 756-residue chain is 1,4-alpha-glucan branching enzyme GlgB (756 aa).

Asp-431 acts as the Nucleophile in catalysis. Glu-484 acts as the Proton donor in catalysis.

Belongs to the glycosyl hydrolase 13 family. GlgB subfamily. Monomer.

It catalyses the reaction Transfers a segment of a (1-&gt;4)-alpha-D-glucan chain to a primary hydroxy group in a similar glucan chain.. It functions in the pathway glycan biosynthesis; glycogen biosynthesis. Catalyzes the formation of the alpha-1,6-glucosidic linkages in glycogen by scission of a 1,4-alpha-linked oligosaccharide from growing alpha-1,4-glucan chains and the subsequent attachment of the oligosaccharide to the alpha-1,6 position. In Prochlorococcus marinus (strain MIT 9303), this protein is 1,4-alpha-glucan branching enzyme GlgB.